We begin with the raw amino-acid sequence, 371 residues long: O-antigen chain mannosyltransferase C (371 aa).

Belongs to the glycosyltransferase group 1 family. Glycosyltransferase 4 subfamily.

The enzyme catalyses N-acetyl-alpha-D-glucosaminyl-di-trans,octa-cis-undecaprenyl diphosphate + GDP-alpha-D-mannose = alpha-D-mannosyl-(1-&gt;3)-N-acetyl-alpha-D-glucosaminyl-di-trans,octa-cis-undecaprenyl diphosphate + GDP + H(+). It participates in bacterial outer membrane biogenesis; LPS O-antigen biosynthesis. In terms of biological role, mannosyltransferase involved in the biosynthesis of the repeat unit of the lipopolysaccharide (LPS) O-antigen region. Catalyzes the transfer of a single alpha-(1-&gt;3)-linked mannose residue to the acceptor N-acetyl-glucosaminyl-diphospho-undecaprenol during the synthesis of the adapter region. The sequence is that of O-antigen chain mannosyltransferase C from Escherichia coli.